Consider the following 321-residue polypeptide: Methionyl-tRNA formyltransferase (321 aa).

111–114 (GLLP) contacts (6S)-5,6,7,8-tetrahydrofolate.

It belongs to the Fmt family.

The enzyme catalyses L-methionyl-tRNA(fMet) + (6R)-10-formyltetrahydrofolate = N-formyl-L-methionyl-tRNA(fMet) + (6S)-5,6,7,8-tetrahydrofolate + H(+). Attaches a formyl group to the free amino group of methionyl-tRNA(fMet). The formyl group appears to play a dual role in the initiator identity of N-formylmethionyl-tRNA by promoting its recognition by IF2 and preventing the misappropriation of this tRNA by the elongation apparatus. The polypeptide is Methionyl-tRNA formyltransferase (Chlamydia abortus (strain DSM 27085 / S26/3) (Chlamydophila abortus)).